A 402-amino-acid chain; its full sequence is UDP-glucose 6-dehydrogenase (402 aa).

Residues 2 to 19 (KIAVAGSGYVGLSLGVLL), V11, D29, K34, T83, T118, and E145 contribute to the NAD(+) site. Residues 141–145 (EFLRE), K204, N208, 249–253 (YNNPS), and G257 each bind substrate. Y259 lines the NAD(+) pocket. The Nucleophile role is filled by C260. Residue K263 coordinates NAD(+). K320 is a binding site for substrate. R327 is a binding site for NAD(+).

Belongs to the UDP-glucose/GDP-mannose dehydrogenase family.

It carries out the reaction UDP-alpha-D-glucose + 2 NAD(+) + H2O = UDP-alpha-D-glucuronate + 2 NADH + 3 H(+). The protein operates within nucleotide-sugar biosynthesis; UDP-alpha-D-glucuronate biosynthesis; UDP-alpha-D-glucuronate from UDP-alpha-D-glucose: step 1/1. Catalyzes the formation of UDP-glucuronic acid which is required for capsular hyaluronic acid synthesis. The protein is UDP-glucose 6-dehydrogenase (hasB) of Streptococcus pyogenes serotype M1.